Consider the following 376-residue polypeptide: Protein RecA (376 aa).

65–72 (GPESSGKT) is a binding site for ATP. A disordered region spans residues 316 to 376 (EHDEIFTSVR…GDDLSDDDIY (61 aa)). Positions 331-350 (GEKKDSDEDPGDNKKSKDSA) are enriched in basic and acidic residues. Acidic residues predominate over residues 366–376 (PGDDLSDDDIY).

Belongs to the RecA family.

Its subcellular location is the cytoplasm. In terms of biological role, can catalyze the hydrolysis of ATP in the presence of single-stranded DNA, the ATP-dependent uptake of single-stranded DNA by duplex DNA, and the ATP-dependent hybridization of homologous single-stranded DNAs. It interacts with LexA causing its activation and leading to its autocatalytic cleavage. This is Protein RecA from Oenococcus oeni (strain ATCC BAA-331 / PSU-1).